The chain runs to 484 residues: Pre-glycoprotein polyprotein GP complex (484 aa).

Gly2 is lipidated: N-myristoyl glycine; by host. Over 2-17 (GQLVSFFQEIPNIIQE) the chain is Extracellular. The chain crosses the membrane as a helical span at residues 18–33 (AINIALIAVSLIAILK). Residues 34 to 58 (GLVNLWKSGLFQLLVFLILAGRSCS) lie on the Cytoplasmic side of the membrane. Cys57 is a binding site for Zn(2+). Residues 59–423 (FKIGRSTELQ…QGKTPITLVD (365 aa)) lie on the Extracellular side of the membrane. 4 cysteine pairs are disulfide-bonded: Cys85–Cys225, Cys270–Cys283, Cys292–Cys301, and Cys355–Cys376. Asn88, Asn125, Asn178, and Asn218 each carry an N-linked (GlcNAc...) asparagine; by host glycan. N-linked (GlcNAc...) asparagine; by host glycans are attached at residues Asn356, Asn364, Asn381, and Asn386. A helical membrane pass occupies residues 424 to 444 (ICFWSTLFFTTTLFLHLVGFP). The Cytoplasmic portion of the chain corresponds to 445-484 (THRHIQGEPCPLPHKLNSNGGCRCGRYPELKKPTTWHRKH). Residues His446, His448, Cys454, His458, Cys466, Cys468, and His484 each coordinate Zn(2+).

It belongs to the arenaviridae GPC protein family. Interacts with glycoprotein G2. Part of the GP complex (GP-C) together with glycoprotein G1 and glycoprotein G2. The GP-complex interacts with protein Z, which interacts with ribonucleocapsid; these interactions may induce virion budding. As to quaternary structure, homotrimer; disulfide-linked. In pre-fusion state, G1 homotrimers bind G2 homotrimers via ionic interactions. Part of the GP complex (GP-C) together with glycoprotein G2 and the stable signal peptide. The GP-complex interacts with protein Z, which interacts with ribonucleocapsid; these interactions may induce virion budding. In terms of assembly, homotrimer. Interacts with the stable signal peptide. In pre-fusion state, G2 homotrimers bind G1 homotrimers via ionic interactions. Part of the GP complex (GP-C) together with glycoprotein G1 and the stable signal peptide. Acidification in the endosome triggers rearrangements, which ultimately leads to a 6 helix bundle formed by the two heptad repeat domains (HR1 and HR2) in post-fusion state. The GP-complex interacts with protein Z, which interacts with ribonucleocapsid; these interactions may induce virion budding. Specific enzymatic cleavages in vivo yield mature proteins. GP-C polyprotein is cleaved in the endoplasmic reticulum by the host protease MBTPS1. Only cleaved glycoprotein is incorporated into virions. In terms of processing, the SSP remains stably associated with the GP complex following cleavage by signal peptidase and plays crucial roles in the trafficking of GP through the secretory pathway. Post-translationally, myristoylation is necessary for GP2-mediated fusion activity.

Its subcellular location is the virion membrane. It is found in the host endoplasmic reticulum membrane. The protein localises to the host Golgi apparatus membrane. The protein resides in the host cell membrane. Functionally, functions as a cleaved signal peptide that is retained as the third component of the GP complex (GP-C). Helps to stabilize the spike complex in its native conformation. The SSP is required for efficient glycoprotein expression, post-translational maturation cleavage of G1 and G2, glycoprotein transport to the cell surface plasma membrane, formation of infectious virus particles, and acid pH-dependent glycoprotein-mediated cell fusion. Its function is as follows. Glycoprotein G1: Forms the virion spikes together with glycoprotein G2. The glycoprotein spike trimers are connected to the underlying matrix. Interacts with the host receptor leading to virus endocytosis. In terms of biological role, forms the virion spikes together with glycoprotein G1. The glycoprotein spike trimers are connected to the underlying matrix. Class I viral fusion protein that directs fusion of viral and host endosomal membranes, leading to delivery of the nucleocapsid into the cytoplasm. Membrane fusion is mediated by irreversible conformational changes induced by acidification. The polypeptide is Pre-glycoprotein polyprotein GP complex (Chapare mammarenavirus (isolate Human/Bolivia/810419/2003)).